A 133-amino-acid polypeptide reads, in one-letter code: Succinate dehydrogenase assembly factor 3, mitochondrial (133 aa).

The transit peptide at 1 to 12 (MNNKLIYRSVRF) directs the protein to the mitochondrion.

It belongs to the complex I LYR family. SDHAF3 subfamily. As to quaternary structure, interacts with SDH2 within an SDH1-SDH2 subcomplex.

The protein localises to the mitochondrion. It is found in the mitochondrion intermembrane space. It localises to the mitochondrion matrix. Its function is as follows. Plays an essential role in the assembly of succinate dehydrogenase (SDH), an enzyme complex (also referred to as respiratory complex II) that is a component of both the tricarboxylic acid (TCA) cycle and the mitochondrial electron transport chain, and which couples the oxidation of succinate to fumarate with the reduction of ubiquinone (coenzyme Q) to ubiquinol. Promotes maturation of the iron-sulfur protein subunit SDH2 of the SDH catalytic dimer, protecting it from the deleterious effects of oxidants. Acts together with SDHAF1 (SDH6). The sequence is that of Succinate dehydrogenase assembly factor 3, mitochondrial from Saccharomyces cerevisiae (strain ATCC 204508 / S288c) (Baker's yeast).